Reading from the N-terminus, the 355-residue chain is 3,4-dihydroxy-2-butanone 4-phosphate synthase (355 aa).

Positions Met1–Asn202 are DHBP synthase. D-ribulose 5-phosphate contacts are provided by residues Arg27–Glu28, Asp32, Arg139–Thr143, and Glu163. Glu28 lines the Mg(2+) pocket. Residue His142 coordinates Mg(2+). Residues Phe203–Val355 form a GTP cyclohydrolase II-like region.

In the N-terminal section; belongs to the DHBP synthase family. It in the C-terminal section; belongs to the GTP cyclohydrolase II family. Requires Mg(2+) as cofactor. Mn(2+) serves as cofactor.

It catalyses the reaction D-ribulose 5-phosphate = (2S)-2-hydroxy-3-oxobutyl phosphate + formate + H(+). The protein operates within cofactor biosynthesis; riboflavin biosynthesis; 2-hydroxy-3-oxobutyl phosphate from D-ribulose 5-phosphate: step 1/1. In terms of biological role, catalyzes the conversion of D-ribulose 5-phosphate to formate and 3,4-dihydroxy-2-butanone 4-phosphate. This chain is 3,4-dihydroxy-2-butanone 4-phosphate synthase (ribB), found in Helicobacter hepaticus (strain ATCC 51449 / 3B1).